A 683-amino-acid polypeptide reads, in one-letter code: U4/U6 small nuclear ribonucleoprotein Prp3 (683 aa).

The 87-residue stretch at 1–87 (MALSKRELDE…HSKSSSDRSR (87 aa)) folds into the PWI domain. Residues 73–107 (GRSSRHSKSSSDRSRKRELKEVFGDDSEISKESSG) show a composition bias toward basic and acidic residues. The interval 73 to 135 (GRSSRHSKSS…IPGPPSESPG (63 aa)) is disordered. A Glycyl lysine isopeptide (Lys-Gly) (interchain with G-Cter in SUMO2) cross-link involves residue lysine 139. The tract at residues 161 to 183 (SFISPPAPQPKTPSSSQPERLPI) is disordered. The residue at position 164 (serine 164) is a Phosphoserine. Glycyl lysine isopeptide (Lys-Gly) (interchain with G-Cter in SUMO2) cross-links involve residues lysine 244 and lysine 252. The mediates interaction with SART3 stretch occupies residues 416 to 550 (NLVEHPAQLN…VHISVYRVRN (135 aa)). Serine 619 is subject to Phosphoserine.

In terms of assembly, component of the precatalytic spliceosome (spliceosome B complex). Component of the U4/U6-U5 tri-snRNP complex, a building block of the precatalytic spliceosome (spliceosome B complex). The U4/U6-U5 tri-snRNP complex is composed of the U4, U6 and U5 snRNAs and at least PRPF3, PRPF4, PRPF6, PRPF8, PRPF31, SNRNP200, TXNL4A, SNRNP40, SNRPB, SNRPD1, SNRPD2, SNRPD3, SNRPE, SNRPF, SNRPG, DDX23, CD2BP2, PPIH, SNU13, EFTUD2, SART1 and USP39, plus LSM2, LSM3, LSM4, LSM5, LSM6, LSM7 and LSM8. Interacts directly with PRPF4. Part of a heteromeric complex containing PPIH, PRPF3 and PRPF4 that is stable in the absence of RNA. Interacts with SART3; the interaction is direct and recruits the deubiquitinase USP4 to PRPF3. Interacts with PRPF19. Interacts ('Lys-63'-linked polyubiquitinated) with PRPF8 (via the MPN (JAB/Mov34) domain); may stabilize the U4/U6-U5 tri-snRNP complex. Interacts with ERCC6. Post-translationally, ubiquitinated. Undergoes 'Lys-63'-linked polyubiquitination by PRPF19 and deubiquitination by USP4. 'Lys-63'-linked ubiquitination increases the affinity for PRPF8 and may regulate the assembly of the U4/U6-U5 tri-snRNP complex.

It is found in the nucleus. Its subcellular location is the nucleus speckle. Functionally, plays a role in pre-mRNA splicing as component of the U4/U6-U5 tri-snRNP complex that is involved in spliceosome assembly, and as component of the precatalytic spliceosome (spliceosome B complex). This Mus musculus (Mouse) protein is U4/U6 small nuclear ribonucleoprotein Prp3 (Prpf3).